A 288-amino-acid polypeptide reads, in one-letter code: 2-hydroxy-6-oxononadienedioate/2-hydroxy-6-oxononatrienedioate hydrolase (288 aa).

His-267 serves as the catalytic Proton acceptor.

This sequence belongs to the AB hydrolase superfamily. MhpC family. Homodimer.

It carries out the reaction (2Z,4E)-2-hydroxy-6-oxonona-2,4-dienedioate + H2O = (2Z)-2-hydroxypenta-2,4-dienoate + succinate + H(+). The catalysed reaction is (2Z,4E,7E)-2-hydroxy-6-oxonona-2,4,7-trienedioate + H2O = (2Z)-2-hydroxypenta-2,4-dienoate + fumarate + H(+). It functions in the pathway aromatic compound metabolism; 3-phenylpropanoate degradation. Catalyzes the cleavage of the C5-C6 bond of 2-hydroxy-6-oxononadienedioate and 2-hydroxy-6-oxononatrienedioate, a dienol ring fission product of the bacterial meta-cleavage pathway for degradation of phenylpropionic acid. This is 2-hydroxy-6-oxononadienedioate/2-hydroxy-6-oxononatrienedioate hydrolase from Escherichia coli (strain K12 / DH10B).